Reading from the N-terminus, the 443-residue chain is Arginine biosynthesis bifunctional protein ArgJ, mitochondrial (443 aa).

Positions 179, 206, 217, 303, 438, and 443 each coordinate substrate. Thr-217 serves as the catalytic Nucleophile.

This sequence belongs to the ArgJ family. Heterodimer of an alpha and a beta chain. The alpha and beta chains are autoproteolytically processed from a single precursor protein within the mitochondrion.

Its subcellular location is the mitochondrion matrix. It catalyses the reaction N(2)-acetyl-L-ornithine + L-glutamate = N-acetyl-L-glutamate + L-ornithine. The catalysed reaction is L-glutamate + acetyl-CoA = N-acetyl-L-glutamate + CoA + H(+). The protein operates within amino-acid biosynthesis; L-arginine biosynthesis; L-ornithine and N-acetyl-L-glutamate from L-glutamate and N(2)-acetyl-L-ornithine (cyclic): step 1/1. It functions in the pathway amino-acid biosynthesis; L-arginine biosynthesis; N(2)-acetyl-L-ornithine from L-glutamate: step 1/4. In terms of biological role, catalyzes two activities which are involved in the cyclic version of arginine biosynthesis: the synthesis of acetylglutamate from glutamate and acetyl-CoA, and of ornithine by transacetylation between acetylornithine and glutamate. The chain is Arginine biosynthesis bifunctional protein ArgJ, mitochondrial from Eremothecium gossypii (strain ATCC 10895 / CBS 109.51 / FGSC 9923 / NRRL Y-1056) (Yeast).